We begin with the raw amino-acid sequence, 213 residues long: LexA repressor (213 aa).

Residues 29-49 (VREICNAVGFKSTSTVHSYLE) constitute a DNA-binding region (H-T-H motif). Residues Ser136 and Lys173 each act as for autocatalytic cleavage activity in the active site.

Belongs to the peptidase S24 family. In terms of assembly, homodimer.

It carries out the reaction Hydrolysis of Ala-|-Gly bond in repressor LexA.. Functionally, represses a number of genes involved in the response to DNA damage (SOS response), including recA and lexA. In the presence of single-stranded DNA, RecA interacts with LexA causing an autocatalytic cleavage which disrupts the DNA-binding part of LexA, leading to derepression of the SOS regulon and eventually DNA repair. This chain is LexA repressor, found in Acetivibrio thermocellus (strain ATCC 27405 / DSM 1237 / JCM 9322 / NBRC 103400 / NCIMB 10682 / NRRL B-4536 / VPI 7372) (Clostridium thermocellum).